We begin with the raw amino-acid sequence, 124 residues long: Acidic phospholipase A2 BA2 (124 aa).

Intrachain disulfides connect Cys-26/Cys-116, Cys-28/Cys-44, Cys-43/Cys-95, Cys-49/Cys-124, Cys-50/Cys-88, Cys-57/Cys-81, and Cys-75/Cys-86. Ca(2+) is bound by residues Tyr-27, Gly-29, and Gly-31. His-47 is a catalytic residue. Asp-48 is a binding site for Ca(2+). The active site involves Asp-89.

The protein belongs to the phospholipase A2 family. Group II subfamily. D49 sub-subfamily. Ca(2+) serves as cofactor. As to expression, expressed by the venom gland.

It is found in the secreted. It carries out the reaction a 1,2-diacyl-sn-glycero-3-phosphocholine + H2O = a 1-acyl-sn-glycero-3-phosphocholine + a fatty acid + H(+). In terms of biological role, PLA2 catalyzes the calcium-dependent hydrolysis of the 2-acyl groups in 3-sn-phosphoglycerides. This chain is Acidic phospholipase A2 BA2, found in Gloydius halys (Chinese water mocassin).